The following is a 148-amino-acid chain: UPF0260 protein YPK_2117 (148 aa).

The protein belongs to the UPF0260 family.

This Yersinia pseudotuberculosis serotype O:3 (strain YPIII) protein is UPF0260 protein YPK_2117.